Reading from the N-terminus, the 196-residue chain is Homeobox protein XENK-2 (196 aa).

Residues 48–72 (PSADESPDNDKELSSNPDSGKKRKR) form a disordered region. The segment at residues 69 to 128 (KRKRRVLFSKAQTYELERRFRQQRYLSAPEREHLASLIRLTPTQVKIWFQNHRYKMKRAR) is a DNA-binding region (homeobox).

The protein belongs to the NK-2 homeobox family. Forebrain and midbrain.

The protein localises to the nucleus. Defines dorsal-ventral domains in developing brain. May play a role in defining positional information along the anterior-posterior (a/p) axis and the dorsal-ventral (d/v) axis of the developing nervous system. May be involved in determining positional or boundary information rather than determining a given cell type. The protein is Homeobox protein XENK-2 of Xenopus laevis (African clawed frog).